Consider the following 313-residue polypeptide: Solute carrier family 35 member E3 (313 aa).

The next 9 membrane-spanning stretches (helical) occupy residues 17–37 (GLLF…WIYV), 40–60 (GFPN…GLYI), 77–97 (LLLL…SLQN), 126–143 (FSTR…GVIL), 153–173 (FLGM…QVWV), 187–206 (LLYY…VPFF), 225–245 (LMVL…YWII), 252–272 (TYNM…YVLF), and 275–295 (PLSI…LAYT).

This sequence belongs to the TPT transporter family. SLC35E subfamily.

The protein localises to the membrane. In terms of biological role, putative transporter. The protein is Solute carrier family 35 member E3 (SLC35E3) of Homo sapiens (Human).